A 270-amino-acid chain; its full sequence is SAGA-associated factor 29 homolog A (270 aa).

The residue at position 2 (Ser-2) is an N-acetylserine. The segment at 85–113 (LPSGPTGQQRRKLEGNEQKRKRMKVDTDV) is disordered. Residues 95 to 113 (RKLEGNEQKRKRMKVDTDV) are compositionally biased toward basic and acidic residues. In terms of domain architecture, SGF29 C-terminal spans 125-270 (EAYASLKGEQ…VVALPEGHRQ (146 aa)). 2 histone H3K4me3 N-terminus binding regions span residues 168-170 (DEE) and 217-220 (GTTA). The interval 242 to 245 (FDDD) is histone H3K4me3 binding.

The protein belongs to the SGF29 family. Expressed in roots, rosette leaves, cauline leaves, stems and flowers.

Its subcellular location is the nucleus. Chromatin reader component of the transcription regulatory histone acetylation (HAT) complex SAGA. Involved in salt stress tolerance. Enhances the effect of ADA2B in the positive regulation of salt-induced gene expression. The polypeptide is SAGA-associated factor 29 homolog A (Arabidopsis thaliana (Mouse-ear cress)).